The sequence spans 302 residues: Small ribosomal subunit biogenesis GTPase RsgA (302 aa).

One can recognise a CP-type G domain in the interval 75-233 (KNELIRPAVS…IMDTPGFSSM (159 aa)). GTP is bound by residues 124 to 127 (NKKD) and 175 to 183 (GPSGVGKSS). Zn(2+) contacts are provided by C257, C262, H264, and C270.

Belongs to the TRAFAC class YlqF/YawG GTPase family. RsgA subfamily. In terms of assembly, monomer. Associates with 30S ribosomal subunit, binds 16S rRNA. It depends on Zn(2+) as a cofactor.

The protein resides in the cytoplasm. Its function is as follows. One of several proteins that assist in the late maturation steps of the functional core of the 30S ribosomal subunit. Helps release RbfA from mature subunits. May play a role in the assembly of ribosomal proteins into the subunit. Circularly permuted GTPase that catalyzes slow GTP hydrolysis, GTPase activity is stimulated by the 30S ribosomal subunit. The polypeptide is Small ribosomal subunit biogenesis GTPase RsgA (Agathobacter rectalis (strain ATCC 33656 / DSM 3377 / JCM 17463 / KCTC 5835 / VPI 0990) (Eubacterium rectale)).